The primary structure comprises 180 residues: Large ribosomal subunit protein uL5 (180 aa).

Belongs to the universal ribosomal protein uL5 family. In terms of assembly, part of the 50S ribosomal subunit; part of the 5S rRNA/L5/L18/L25 subcomplex. Contacts the 5S rRNA and the P site tRNA. Forms a bridge to the 30S subunit in the 70S ribosome.

Its function is as follows. This is one of the proteins that bind and probably mediate the attachment of the 5S RNA into the large ribosomal subunit, where it forms part of the central protuberance. In the 70S ribosome it contacts protein S13 of the 30S subunit (bridge B1b), connecting the 2 subunits; this bridge is implicated in subunit movement. Contacts the P site tRNA; the 5S rRNA and some of its associated proteins might help stabilize positioning of ribosome-bound tRNAs. In Clostridium tetani (strain Massachusetts / E88), this protein is Large ribosomal subunit protein uL5.